The following is a 355-amino-acid chain: Alanine racemase (355 aa).

Catalysis depends on Lys37, which acts as the Proton acceptor; specific for D-alanine. The residue at position 37 (Lys37) is an N6-(pyridoxal phosphate)lysine. Residue Arg129 participates in substrate binding. Tyr251 (proton acceptor; specific for L-alanine) is an active-site residue. Met299 serves as a coordination point for substrate.

This sequence belongs to the alanine racemase family. It depends on pyridoxal 5'-phosphate as a cofactor.

The enzyme catalyses L-alanine = D-alanine. It functions in the pathway amino-acid biosynthesis; D-alanine biosynthesis; D-alanine from L-alanine: step 1/1. In terms of biological role, catalyzes the interconversion of L-alanine and D-alanine. May also act on other amino acids. In Deinococcus geothermalis (strain DSM 11300 / CIP 105573 / AG-3a), this protein is Alanine racemase (alr).